An 826-amino-acid chain; its full sequence is Ribonucleoside-diphosphate reductase large subunit (826 aa).

Substrate contacts are provided by residues threonine 171, 186 to 187, glycine 217, 387 to 391, and 594 to 598; these read SC, NLCAE, and PTSGC. Cysteine 187 and cysteine 403 are disulfide-bonded. Asparagine 387 (proton acceptor) is an active-site residue. Residue cysteine 389 is the Cysteine radical intermediate of the active site. Glutamate 391 acts as the Proton acceptor in catalysis.

Belongs to the ribonucleoside diphosphate reductase large chain family. As to quaternary structure, heterotetramer composed of a homodimer of the large subunit (R1) and a homodimer of the small subunit (R2). Larger multisubunit protein complex are also active, composed of (R1)n(R2)n.

The enzyme catalyses a 2'-deoxyribonucleoside 5'-diphosphate + [thioredoxin]-disulfide + H2O = a ribonucleoside 5'-diphosphate + [thioredoxin]-dithiol. Its function is as follows. Ribonucleoside-diphosphate reductase holoenzyme provides the precursors necessary for viral DNA synthesis. Allows virus growth in non-dividing cells, as well as reactivation from latency in infected hosts. Catalyzes the biosynthesis of deoxyribonucleotides from the corresponding ribonucleotides. The sequence is that of Ribonucleoside-diphosphate reductase large subunit from Epstein-Barr virus (strain GD1) (HHV-4).